The sequence spans 288 residues: F420-non-reducing hydrogenase vhu subunit G (288 aa).

It belongs to the [NiFe]/[NiFeSe] hydrogenase small subunit family. In terms of assembly, the F420-non-reducing hydrogenase vhu is composed of four subunits; VhuA, VhuD, VhuG and VhuU.

The chain is F420-non-reducing hydrogenase vhu subunit G (vhuG) from Methanocaldococcus jannaschii (strain ATCC 43067 / DSM 2661 / JAL-1 / JCM 10045 / NBRC 100440) (Methanococcus jannaschii).